A 696-amino-acid polypeptide reads, in one-letter code: Spindle assembly checkpoint component MAD1 (696 aa).

Disordered regions lie at residues 1-22 (MSTG…SINN) and 394-415 (QIHA…TENK). A compositionally biased stretch (basic and acidic residues) spans 402–413 (KQQEQEKEENTE).

This sequence belongs to the MAD1 family. In terms of assembly, component of the mitotic checkpoint complex (MCC).

It localises to the nucleus. Functionally, central component of the spindle assembly checkpoint which is a feedback control that prevents cells with incompletely assembled spindles from leaving mitosis. The protein is Spindle assembly checkpoint component MAD1 of Candida albicans (strain SC5314 / ATCC MYA-2876) (Yeast).